Reading from the N-terminus, the 111-residue chain is MTPAAHGCKRVAWCPSRPPASAPSAPQEAARRGDAMGLKPSCLKGFKMCVSSSNNNHDEAPVLNDKHLSVPNIIITPPTPTGMGLSRDSNKQVWMDELGSYQDDGELEPEA.

A disordered region spans residues 12-34; the sequence is AWCPSRPPASAPSAPQEAARRGD. The segment at 71–76 is required for interaction with PPP3CA; sequence PNIIIT. 2 positions are modified to phosphothreonine: Thr-79 and Thr-81.

As to quaternary structure, interacts (via PxIxIT motif, when phosphorylated on Thr-79) with PPP3CA.

This is an uncharacterized protein from Mus musculus (Mouse).